Here is a 638-residue protein sequence, read N- to C-terminus: Carbon monoxide dehydrogenase (638 aa).

The [4Fe-4S] cluster site is built by C46, C55, C58, C63, and C74. [Ni-4Fe-5S] cluster is bound by residues H265, C299, C343, C452, C483, and C524.

Belongs to the Ni-containing carbon monoxide dehydrogenase family. Homodimer. [4Fe-4S] cluster is required as a cofactor. [Ni-4Fe-5S] cluster serves as cofactor.

The enzyme catalyses CO + 2 oxidized [2Fe-2S]-[ferredoxin] + H2O = 2 reduced [2Fe-2S]-[ferredoxin] + CO2 + 2 H(+). Its function is as follows. CODH oxidizes carbon monoxide coupled, via CooF, to the reduction of a hydrogen cation by a hydrogenase (possibly CooH). This chain is Carbon monoxide dehydrogenase (cooS), found in Methanopyrus kandleri (strain AV19 / DSM 6324 / JCM 9639 / NBRC 100938).